The chain runs to 440 residues: 3-phosphoshikimate 1-carboxyvinyltransferase (440 aa).

The 3-phosphoshikimate site is built by lysine 26, serine 27, and arginine 31. Lysine 26 contributes to the phosphoenolpyruvate binding site. The phosphoenolpyruvate site is built by glycine 99 and arginine 127. 3-phosphoshikimate is bound by residues serine 172, glutamine 174, aspartate 320, and lysine 347. Residue glutamine 174 coordinates phosphoenolpyruvate. The active-site Proton acceptor is aspartate 320. Residues arginine 351 and arginine 392 each contribute to the phosphoenolpyruvate site.

The protein belongs to the EPSP synthase family. In terms of assembly, monomer.

The protein resides in the cytoplasm. The catalysed reaction is 3-phosphoshikimate + phosphoenolpyruvate = 5-O-(1-carboxyvinyl)-3-phosphoshikimate + phosphate. It functions in the pathway metabolic intermediate biosynthesis; chorismate biosynthesis; chorismate from D-erythrose 4-phosphate and phosphoenolpyruvate: step 6/7. Its function is as follows. Catalyzes the transfer of the enolpyruvyl moiety of phosphoenolpyruvate (PEP) to the 5-hydroxyl of shikimate-3-phosphate (S3P) to produce enolpyruvyl shikimate-3-phosphate and inorganic phosphate. The polypeptide is 3-phosphoshikimate 1-carboxyvinyltransferase (Xanthomonas axonopodis pv. citri (strain 306)).